The sequence spans 102 residues: Large ribosomal subunit protein uL23 (102 aa).

This sequence belongs to the universal ribosomal protein uL23 family. In terms of assembly, part of the 50S ribosomal subunit. Contacts protein L29, and trigger factor when it is bound to the ribosome.

One of the early assembly proteins it binds 23S rRNA. One of the proteins that surrounds the polypeptide exit tunnel on the outside of the ribosome. Forms the main docking site for trigger factor binding to the ribosome. This is Large ribosomal subunit protein uL23 from Paramagnetospirillum magneticum (strain ATCC 700264 / AMB-1) (Magnetospirillum magneticum).